A 405-amino-acid chain; its full sequence is Glucose-1-phosphate adenylyltransferase (405 aa).

Alpha-D-glucose 1-phosphate-binding positions include Tyr-96, Gly-161, 176 to 177, and Ser-194; that span reads EK.

This sequence belongs to the bacterial/plant glucose-1-phosphate adenylyltransferase family. In terms of assembly, homotetramer.

It catalyses the reaction alpha-D-glucose 1-phosphate + ATP + H(+) = ADP-alpha-D-glucose + diphosphate. Its pathway is glycan biosynthesis; glycogen biosynthesis. In terms of biological role, involved in the biosynthesis of ADP-glucose, a building block required for the elongation reactions to produce glycogen. Catalyzes the reaction between ATP and alpha-D-glucose 1-phosphate (G1P) to produce pyrophosphate and ADP-Glc. In Photobacterium profundum (strain SS9), this protein is Glucose-1-phosphate adenylyltransferase.